A 275-amino-acid polypeptide reads, in one-letter code: 2,3,4,5-tetrahydropyridine-2,6-dicarboxylate N-succinyltransferase (275 aa).

Substrate contacts are provided by Arg105 and Asp142.

Belongs to the transferase hexapeptide repeat family. Homotrimer.

It localises to the cytoplasm. The catalysed reaction is (S)-2,3,4,5-tetrahydrodipicolinate + succinyl-CoA + H2O = (S)-2-succinylamino-6-oxoheptanedioate + CoA. The protein operates within amino-acid biosynthesis; L-lysine biosynthesis via DAP pathway; LL-2,6-diaminopimelate from (S)-tetrahydrodipicolinate (succinylase route): step 1/3. The protein is 2,3,4,5-tetrahydropyridine-2,6-dicarboxylate N-succinyltransferase of Pectobacterium atrosepticum (strain SCRI 1043 / ATCC BAA-672) (Erwinia carotovora subsp. atroseptica).